Consider the following 1104-residue polypeptide: Receptor-type guanylate cyclase gcy-15 (1104 aa).

Over 1–431 the chain is Extracellular; the sequence is MEIAINRLNA…ENCGPPANNT (431 aa). N-linked (GlcNAc...) asparagine glycans are attached at residues Asn43, Asn237, Asn263, Asn287, Asn407, and Asn429. A helical transmembrane segment spans residues 432 to 452; that stretch reads FIIVISVGVAVLIGLAIAAAF. Residues 453-1104 lie on the Cytoplasmic side of the membrane; the sequence is LYKRYRYERR…QIQEKTYEFS (652 aa). One can recognise a Protein kinase domain in the interval 528–823; the sequence is FNTGSTARAG…QIKRKLKPLT (296 aa). ATP contacts are provided by residues 534–542 and Lys576; that span reads ARAGPFGPI. The stretch at 838 to 871 forms a coiled coil; that stretch reads IEKYTDKLEKDIAERNEELEAEKAKSEALLKMML. The 131-residue stretch at 894–1024 folds into the Guanylate cyclase domain; sequence TVFFSDCPGF…DTVNTASRME (131 aa).

Belongs to the adenylyl cyclase class-4/guanylyl cyclase family. In terms of tissue distribution, expressed bilaterally in ASG sensory neurons.

It is found in the cell membrane. The catalysed reaction is GTP = 3',5'-cyclic GMP + diphosphate. Its function is as follows. Guanylate cyclase involved in the production of the second messenger cGMP. This Caenorhabditis elegans protein is Receptor-type guanylate cyclase gcy-15.